The sequence spans 155 residues: MKCPFCGHSSTQVLDSRVSEDGDTVRRRRRCEACDRRFTTYERIELFFPAIVKKNGSRVDYARAKLKDSMRLALRKRPVSAEAIDEAITRIEEKLLALGEKEIPSSQVGELVMRELRKLDKIAYIRFASVYRSFEDVSEFREMLDEFSSSTPRKG.

Residues 3 to 34 (CPFCGHSSTQVLDSRVSEDGDTVRRRRRCEAC) fold into a zinc finger. One can recognise an ATP-cone domain in the interval 49-139 (PAIVKKNGSR…VYRSFEDVSE (91 aa)).

Belongs to the NrdR family. Requires Zn(2+) as cofactor.

In terms of biological role, negatively regulates transcription of bacterial ribonucleotide reductase nrd genes and operons by binding to NrdR-boxes. The protein is Transcriptional repressor NrdR of Cupriavidus metallidurans (strain ATCC 43123 / DSM 2839 / NBRC 102507 / CH34) (Ralstonia metallidurans).